Reading from the N-terminus, the 214-residue chain is Dephospho-CoA kinase (214 aa).

One can recognise a DPCK domain in the interval 4–204 (IVGLTGGIGS…QRYLQLAQQK (201 aa)). 12-17 (GSGKST) is an ATP binding site.

It belongs to the CoaE family.

The protein resides in the cytoplasm. The catalysed reaction is 3'-dephospho-CoA + ATP = ADP + CoA + H(+). Its pathway is cofactor biosynthesis; coenzyme A biosynthesis; CoA from (R)-pantothenate: step 5/5. Its function is as follows. Catalyzes the phosphorylation of the 3'-hydroxyl group of dephosphocoenzyme A to form coenzyme A. This Mannheimia succiniciproducens (strain KCTC 0769BP / MBEL55E) protein is Dephospho-CoA kinase.